The chain runs to 549 residues: Maturase K (549 aa).

The protein belongs to the intron maturase 2 family. MatK subfamily.

It localises to the plastid. Its subcellular location is the chloroplast. Usually encoded in the trnK tRNA gene intron. Probably assists in splicing its own and other chloroplast group II introns. This Albidella oligococca (Caldesia oligococca) protein is Maturase K.